The chain runs to 5148 residues: E3 ubiquitin-protein ligase RNF213 (5148 aa).

The segment covering 38 to 48 (DNTLVVSSTPE) has biased composition (polar residues). The disordered stretch occupies residues 38–341 (DNTLVVSSTP…QAAAPEPTSA (304 aa)). Over residues 69–78 (PGKELEKPEE) the composition is skewed to basic and acidic residues. Positions 101–113 (GTISSSEAPSSGL) are enriched in polar residues. The span at 130-146 (PQNQAQQGGAASQPGHP) shows a compositional bias: low complexity. Ser196 carries the post-translational modification Phosphoserine. Composition is skewed to basic and acidic residues over residues 233–245 (SKGE…KKVP), 257–267 (AGKETGEDVRK), and 279–289 (KHGDQEAELKG). Over residues 319–335 (AAAVKTQQAAAPQQAAA) the composition is skewed to low complexity. Residue Lys1128 forms a Glycyl lysine isopeptide (Lys-Gly) (interchain with G-Cter in SUMO2) linkage. ATP is bound by residues 1957–1962 (GVGKSL), Glu2060, Ala2114, Asp2116, and Arg2177. At Ser2234 the chain carries Phosphoserine. The ATP site is built by Lys2460 and Ser2535. Residues 3435–3465 (EEMEIETSQSKELAEEQMEVEDSEEMKKASD) adopt a coiled-coil conformation. Positions 3947, 3950, 3962, 3964, 3967, 3970, 3982, 3985, 4451, and 4455 each coordinate Zn(2+). The RING-type zinc finger occupies 3947 to 3986 (CFICHGDAQDPVCLPCDHVYCLRCIQTWLIPGQMMCPYCL). The segment at 4429–4501 (MPEDLLVHAR…IRNNEDRTQT (73 aa)) adopts an RZ-type zinc-finger fold. The active-site Nucleophile; for E3 ubiquitin-lipopolysaccharide ligase activity is the Cys4462. Zn(2+) contacts are provided by Cys4471 and Cys4474.

The protein belongs to the AAA ATPase family. In terms of assembly, monomer. Interacts with UBE2L3/UBCH7; UBE2L3/UBCH7 is the most efficient ubiquitin-conjugating enzyme E2 for the ubiquitin ligase activity. Interacts with UBE2N/UBC13; promoting 'Lys-63'-linked ubiquitination of target proteins.

The protein localises to the cytoplasm. It is found in the cytosol. It localises to the lipid droplet. The catalysed reaction is S-ubiquitinyl-[E2 ubiquitin-conjugating enzyme]-L-cysteine + [acceptor protein]-L-lysine = [E2 ubiquitin-conjugating enzyme]-L-cysteine + N(6)-ubiquitinyl-[acceptor protein]-L-lysine.. It catalyses the reaction ATP + H2O = ADP + phosphate + H(+). The protein operates within protein modification; protein ubiquitination. In terms of biological role, atypical E3 ubiquitin ligase that can catalyze ubiquitination of both proteins and lipids, and which is involved in various processes, such as lipid metabolism, angiogenesis and cell-autonomous immunity. Acts as a key immune sensor by catalyzing ubiquitination of the lipid A moiety of bacterial lipopolysaccharide (LPS) via its RZ-type zinc-finger: restricts the proliferation of cytosolic bacteria, such as Salmonella, by generating the bacterial ubiquitin coat through the ubiquitination of LPS. Also acts indirectly by mediating the recruitment of the LUBAC complex, which conjugates linear polyubiquitin chains. Ubiquitination of LPS triggers cell-autonomous immunity, such as antibacterial autophagy, leading to degradation of the microbial invader. Involved in lipid metabolism by regulating fat storage and lipid droplet formation; act by inhibiting the lipolytic process. Also regulates lipotoxicity by inhibiting desaturation of fatty acids. Also acts as an E3 ubiquitin-protein ligase via its RING-type zinc finger: mediates 'Lys-63'-linked ubiquitination of target proteins. Involved in the non-canonical Wnt signaling pathway in vascular development: acts by mediating ubiquitination and degradation of FLNA and NFATC2 downstream of RSPO3, leading to inhibit the non-canonical Wnt signaling pathway and promoting vessel regression. Also has ATPase activity; ATPase activity is required for ubiquitination of LPS. The sequence is that of E3 ubiquitin-protein ligase RNF213 from Mus musculus (Mouse).